The sequence spans 457 residues: Methylphosphonate synthase (457 aa).

The region spanning 23 to 74 is the HTH cro/C1-type 1 domain; sequence ILNDIKRRPEDAANELGVSIEEINSIISGKQKISPSLIEKAVNIWPVNERDF. Positions 32-50 form a DNA-binding region, H-T-H motif; that stretch reads EDAANELGVSIEEINSIIS. The Fe cation site is built by H148 and H190. Residues 247–301 enclose the HTH cro/C1-type 2 domain; that stretch reads LEYYFELSNLTKEKFAKRTNFSMETLADFFTKKKLPTFDELKIIAKALNVNSRDL. Positions 258-277 form a DNA-binding region, H-T-H motif; it reads KEKFAKRTNFSMETLADFFT.

Belongs to the non-heme iron-dependent dioxygenase family. It depends on Fe(2+) as a cofactor.

It catalyses the reaction 2-hydroxyethylphosphonate + O2 = methylphosphonate + hydrogencarbonate + H(+). The protein operates within phosphorus metabolism; phosphonate biosynthesis. Its function is as follows. Catalyzes the conversion of 2-hydroxyethylphosphonate into methylphosphonate in the methylphosphonate biosynthesis pathway. This chain is Methylphosphonate synthase (mpnS), found in Nitrosopumilus maritimus (strain SCM1).